A 170-amino-acid chain; its full sequence is Adenine phosphoribosyltransferase (170 aa).

The protein belongs to the purine/pyrimidine phosphoribosyltransferase family. In terms of assembly, homodimer.

It localises to the cytoplasm. The catalysed reaction is AMP + diphosphate = 5-phospho-alpha-D-ribose 1-diphosphate + adenine. The protein operates within purine metabolism; AMP biosynthesis via salvage pathway; AMP from adenine: step 1/1. Catalyzes a salvage reaction resulting in the formation of AMP, that is energically less costly than de novo synthesis. The protein is Adenine phosphoribosyltransferase of Mycoplasma mycoides subsp. mycoides SC (strain CCUG 32753 / NCTC 10114 / PG1).